A 481-amino-acid polypeptide reads, in one-letter code: Bindin (481 aa).

The N-terminal stretch at 1–20 is a signal peptide; that stretch reads MGFHQILVTVVALALASVRA. Positions 21 to 245 are excised as a propeptide; that stretch reads EFPSRTDSPT…DSKRGARKKR (225 aa). Composition is skewed to basic and acidic residues over residues 154-163 and 178-189; these read DGDLRKRRES and RKGDEPAGHTLK. Disordered regions lie at residues 154–193 and 219–243; these read DGDL…DLAP and GHSP…GARK. The tract at residues 352–360 is fucose-binding domain; it reads LRHLRHHSN. The disordered stretch occupies residues 376–481; the sequence is SAMQEEEEEE…QPYGQGYLQG (106 aa). The span at 379–389 shows a compositional bias: acidic residues; the sequence is QEEEEEEEEDA. Gly residues predominate over residues 406–416; the sequence is AGFGGGGGGGA. Low complexity-rich tracts occupy residues 417-440 and 464-481; these read MMSP…MGFP and GMGM…YLQG.

The protein belongs to the bindin family.

The protein localises to the cytoplasmic vesicle. It is found in the secretory vesicle. It localises to the acrosome lumen. Functionally, species-specific sea urchin sperm protein required for adhesion of sperm to the egg surface during fertilization. Bindin coats the acrosomal process after it is externalized by the acrosome reaction. It binds to sulfated, fucose-containing polysaccharides on the vitelline layer receptor proteoglycans which cover the egg plasma membrane. The polypeptide is Bindin (Strongylocentrotus purpuratus (Purple sea urchin)).